The chain runs to 468 residues: MNTDVRIEKDFLGEKEIPKDAYYGVQTIRATENFPITGYRIHPELIKSLGIVKKSAALANMEVGLLDKEVGQYIVKAADEVIEGKWNDQFIVDPIQGGAGTSINMNANEVIANRALELMGEEKGNYSKISPNSHVNMSQSTNDAFPTATHIAVLSLLNQLIETTKYMQQEFMKKADEFAGVIKMGRTHLQDAVPILLGQEFEAYARVIARDIERIANTRNNLYDINMGATAVGTGLNADPEYISIVTEHLAKFSGHPLRSAQHLVDATQNTDCYTEVSSALKVCMINMSKIANDLRLMASGPRAGLSEIVLPARQPGSSIMPGKVNPVMPEVMNQVAFQVFGNDLTITSASEAGQFELNVMEPVLFFNLIQSISIMTNVFKSFTENCLKGIKANEERMKEYVEKSIGIITAINPHVGYETAAKLAREAYLTGESIRELCIKYGVLTEEQLNEILNPYEMTHPGIAGRK.

Threonine 101, serine 140, threonine 141, asparagine 142, threonine 187, and histidine 188 together coordinate L-aspartate. Residues glycine 317 to asparagine 326 form an SS loop region. Catalysis depends on serine 318, which acts as the Proton acceptor. L-aspartate-binding residues include serine 319 and lysine 324.

The protein belongs to the class-II fumarase/aspartase family. Aspartase subfamily. As to quaternary structure, homotetramer.

It carries out the reaction L-aspartate = fumarate + NH4(+). Its activity is regulated as follows. Unlike E.coli aspartase, the enzyme is not activated by the presence of divalent metal ions at alkaline pH. Its function is as follows. Catalyzes the reversible conversion of L-aspartate to fumarate and ammonia. Is highly specific for L-aspartate in the deamination reaction, and cannot use alternative substrates such as D-aspartic acid, alpha-methyl-DL-aspartic acid, beta-methyl-DL-aspartic acid or L-glutamate. In the reverse reaction, alternative nucleophiles (such as hydroxylamine, hydrazine, methoxylamine and methylamine) can replace ammonia in vitro, leading to the formation of N-substituted aspartic acid derivatives. In Bacillus sp, this protein is Aspartate ammonia-lyase.